A 386-amino-acid polypeptide reads, in one-letter code: Meiotic chromosome segregation protein C1539.02 (386 aa).

3 disordered regions span residues 1 to 28 (MNQD…SNKS), 46 to 85 (RALI…SSKQ), and 366 to 386 (DIHE…KTKG). Positions 15-28 (AETSQLKNFSSNKS) are enriched in polar residues.

It localises to the nucleus. Required for meiotic chromosome segregation. This Schizosaccharomyces pombe (strain 972 / ATCC 24843) (Fission yeast) protein is Meiotic chromosome segregation protein C1539.02.